The sequence spans 111 residues: Large ribosomal subunit protein eL31 (111 aa).

It belongs to the eukaryotic ribosomal protein eL31 family.

The chain is Large ribosomal subunit protein eL31 (rpl31) from Dictyostelium discoideum (Social amoeba).